The chain runs to 334 residues: HTH-type transcriptional repressor PurR (334 aa).

The HTH lacI-type domain occupies 2-56 (ATIKDVARLAGVSTTTVSHVINKTRFVAEATQEKVMKAVDELNYAPSAVARSLKC). A DNA-binding region (H-T-H motif) is located at residues 4-23 (IKDVARLAGVSTTTVSHVIN). The DNA-binding element occupies 48-56 (SAVARSLKC). Residues Phe-73, Lys-189, Phe-220, and Asp-274 each coordinate hypoxanthine.

As to quaternary structure, homodimer.

Its pathway is purine metabolism; purine nucleotide biosynthesis [regulation]. Is the main repressor of the genes involved in the de novo synthesis of purine nucleotides, regulating purB, purC, purEK, purF, purHD, purL, purMN and guaBA expression. PurR is allosterically activated to bind its cognate DNA by binding the purine corepressors, hypoxanthine or guanine, thereby effecting transcription repression. The protein is HTH-type transcriptional repressor PurR of Vibrio vulnificus (strain CMCP6).